The sequence spans 80 residues: Conotoxin VnMSGL-0123 (80 aa).

The N-terminal stretch at 1–20 (MSGLGIMVLTLLLLVSMATS) is a signal peptide. Positions 21 to 44 (HQDGGGKQATQRDAINVRRRRSIT) are excised as a propeptide. 3 disulfide bridges follow: Cys-53-Cys-65, Cys-57-Cys-74, and Cys-64-Cys-78. The residue at position 79 (Phe-79) is a Phenylalanine amide.

The protein belongs to the conotoxin O3 superfamily. As to expression, expressed by the venom duct.

It is found in the secreted. This chain is Conotoxin VnMSGL-0123, found in Conus ventricosus (Mediterranean cone).